Reading from the N-terminus, the 272-residue chain is uncharacterized protein (272 aa).

2 consecutive transmembrane segments (helical) span residues 9 to 29 (GGDI…ASEH) and 252 to 272 (SHIS…ISFI).

The protein resides in the membrane. This is an uncharacterized protein from Caenorhabditis elegans.